Consider the following 167-residue polypeptide: MNQSYFNLLGNITWLWMNSSLHKEWSCELLARNVIPAIENEQYMLLIDNGIPIAYCSWADLNLETEVKYIKDINSLTPEEWQSGDRRWIIDWVAPFGHSQLLYKKMCQKYPDMIVRSIRFYPKQKELGKIAYFKGGKLDKKTAKKRFDTYQEELATALKNEFNFIKK.

Catalysis depends on residues H22 and D91.

It belongs to the RTX toxin acyltransferase family.

Its subcellular location is the cytoplasm. The catalysed reaction is a fatty acyl-[ACP] + L-lysyl-[protein] = N(6)-(fatty acyl)-L-lysyl-[protein] + holo-[ACP] + H(+). In terms of biological role, involved in fatty acylation of the protoxin (LktA) at two internal lysine residues, thereby converting it to the active toxin. The protein is Leukotoxin-activating lysine-acyltransferase LktC serotype A1 (lktC) of Mannheimia haemolytica (Pasteurella haemolytica).